A 94-amino-acid polypeptide reads, in one-letter code: Small ubiquitin-related modifier 3 (94 aa).

Lysine 11 participates in a covalent cross-link: Glycyl lysine isopeptide (Lys-Gly) (interchain with G-Cter in SUMO). Residues aspartate 15–glycine 92 form the Ubiquitin-like domain. Residue glycine 92 forms a Glycyl lysine isopeptide (Gly-Lys) (interchain with K-? in acceptor proteins) linkage. The propeptide occupies leucine 93 to cysteine 94.

The protein belongs to the ubiquitin family. SUMO subfamily. As to quaternary structure, interacts with SAE2 and UBE2I. Covalently attached to a number of proteins. Polymeric chains can be formed through Lys-11 cross-linking. Post-translationally, cleavage of precursor form by a sentrin-specific protease is necessary for function.

It localises to the cytoplasm. It is found in the nucleus. Its subcellular location is the PML body. Ubiquitin-like protein which can be covalently attached to target lysines either as a monomer or as a lysine-linked polymer. Does not seem to be involved in protein degradation and may function as an antagonist of ubiquitin in the degradation process. Plays a role in a number of cellular processes such as nuclear transport, DNA replication and repair, mitosis and signal transduction. Covalent attachment to its substrates requires prior activation by the E1 complex SAE1-SAE2 and linkage to the E2 enzyme UBE2I. The sequence is that of Small ubiquitin-related modifier 3 from Gallus gallus (Chicken).